A 249-amino-acid polypeptide reads, in one-letter code: Histone H1 (249 aa).

Low complexity-rich tracts occupy residues 1-19 and 27-43; these read MSDS…QTAS and KKPA…TTAP. Disordered regions lie at residues 1 to 53 and 105 to 249; these read MSDS…QQMV and QTKG…ATKK. One can recognise an H15 domain in the interval 45–119; the sequence is THPPTQQMVD…GASGSFKLSA (75 aa). Residues 121-134 show a composition bias toward basic and acidic residues; the sequence is SKKEPKPKVSSVEK. The span at 146–158 shows a compositional bias: basic residues; sequence AKKKTISATKKPK. Positions 173–190 are enriched in basic and acidic residues; sequence KSVDKKKAEKAKAKDAKK. Positions 195–233 are enriched in low complexity; the sequence is KAKPTTAKAKSSAAKPKTPKPKTTSAKPKKVVAAASPKK. The segment covering 234–249 has biased composition (basic residues); sequence AAAKKPKAKTASATKK.

Belongs to the histone H1/H5 family.

The protein localises to the nucleus. It localises to the chromosome. In terms of biological role, histones H1 are necessary for the condensation of nucleosome chains into higher-order structures. The sequence is that of Histone H1 (His1) from Drosophila hydei (Fruit fly).